The sequence spans 932 residues: MIPARLHRDYKGLVLLGILLGTLWETGCTQIRYSVPEELEKGSRVGDISRDLGLEPRELAERGVRIIPRGRTQLFALNPRSGSLVTAGRIDREELCMGAIKCQLNLDILMEDKVKIYGVEVEVRDINDNAPYFRESELEIKISENAATEMRFPLPHAWDPDIGKNSLQSYELSPNTHFSLIVQNGADGSKYPELVLKRALDREEKAAHHLVLTASDGGDPVRTGTARIRVMVLDANDNAPAFAQPEYRASVPENLALGTQLLVVNATDPDEGVNAEVRYSFRSVDDKAAQVFKLDCNSGTISTIGELDHEESGFYQMEVQAMDNAGYSARAKVLITVLDVNDNAPEVVLTSLASSVPENSPRGTLIALLNVNDQDSEENGQVICFIQGNLPFKLEKSYGNYYSLVTDIVLDREQVPSYNITVTATDRGTPPLSTETHISLNVADTNDNPPVFPQASYSAYIPENNPRGVSLVSVTAHDPDCEENAQITYSLAENTIQGASLSSYVSINSDTGVLYALSSFDYEQFRDLQVKVMARDNGHPPLSSNVSLSLFVLDQNDNAPEILYPALPTDGSTSVELAPRSAEPGYLVTKVVAVDRDSGQNAWLSYRLLKASEPGLFSVGLHTGEVRTARALLDRDALKQSLVVAVQDHGQPPLSATVTLTVAVANSIPQVLADLGSLESPANSETSDLTLYLVVAVAAVSCVFLAFVILLLALRLRRWHKSRLLQASGGGLTGAPASHFVGVDGVQAFLQTYSHEVSLTTDSRRSHLIFPQPNYADMLVSQESFEKSEPLLLSGDSVFSKDGHGLIEQAPPNTDWRFSQAQRPGTSGSQNGDDTGTWPNNQFDTEMLQAMILASASEAADGSSTLGGGAGTMGLSARYGPQFTLQHVPDYRQNVYIPGSNATLTNAAGKRDGKAPAGGNGNKKKSGKKEKK.

A signal peptide spans 1–29; it reads MIPARLHRDYKGLVLLGILLGTLWETGCT. 6 Cadherin domains span residues 30–133, 134–242, 243–347, 348–452, 453–562, and 570–683; these read QIRY…APYF, RESE…APAF, AQPE…APEV, VLTS…PPVF, PQAS…APEI, and DGST…SPAN. Residues 30-692 are Extracellular-facing; sequence QIRYSVPEEL…NSETSDLTLY (663 aa). Asparagine 265, asparagine 419, and asparagine 545 each carry an N-linked (GlcNAc...) asparagine glycan. A helical membrane pass occupies residues 693–713; the sequence is LVVAVAAVSCVFLAFVILLLA. At 714 to 932 the chain is on the cytoplasmic side; it reads LRLRRWHKSR…KKKSGKKEKK (219 aa). 2 disordered regions span residues 803–841 and 902–932; these read GHGL…WPNN and ATLT…KEKK. Positions 816–841 are enriched in polar residues; it reads WRFSQAQRPGTSGSQNGDDTGTWPNN. A compositionally biased stretch (basic residues) spans 922 to 932; sequence NKKKSGKKEKK.

The protein resides in the cell membrane. Its function is as follows. Potential calcium-dependent cell-adhesion protein. May be involved in the establishment and maintenance of specific neuronal connections in the brain. The sequence is that of Protocadherin gamma-A12 (PCDHGA12) from Pan troglodytes (Chimpanzee).